We begin with the raw amino-acid sequence, 223 residues long: Probable transaldolase (223 aa).

Catalysis depends on lysine 91, which acts as the Schiff-base intermediate with substrate.

It belongs to the transaldolase family. Type 3B subfamily.

It is found in the cytoplasm. It carries out the reaction D-sedoheptulose 7-phosphate + D-glyceraldehyde 3-phosphate = D-erythrose 4-phosphate + beta-D-fructose 6-phosphate. Its pathway is carbohydrate degradation; pentose phosphate pathway; D-glyceraldehyde 3-phosphate and beta-D-fructose 6-phosphate from D-ribose 5-phosphate and D-xylulose 5-phosphate (non-oxidative stage): step 2/3. Transaldolase is important for the balance of metabolites in the pentose-phosphate pathway. The polypeptide is Probable transaldolase (Prosthecochloris aestuarii (strain DSM 271 / SK 413)).